The following is a 438-amino-acid chain: Serine--tRNA ligase (438 aa).

An L-serine-binding site is contributed by 245–247 (TSE). 276–278 (RSE) contacts ATP. E299 serves as a coordination point for L-serine. 363–366 (EISS) contributes to the ATP binding site. S398 is an L-serine binding site.

The protein belongs to the class-II aminoacyl-tRNA synthetase family. Type-1 seryl-tRNA synthetase subfamily. Homodimer. The tRNA molecule binds across the dimer.

It is found in the cytoplasm. The enzyme catalyses tRNA(Ser) + L-serine + ATP = L-seryl-tRNA(Ser) + AMP + diphosphate + H(+). It catalyses the reaction tRNA(Sec) + L-serine + ATP = L-seryl-tRNA(Sec) + AMP + diphosphate + H(+). It functions in the pathway aminoacyl-tRNA biosynthesis; selenocysteinyl-tRNA(Sec) biosynthesis; L-seryl-tRNA(Sec) from L-serine and tRNA(Sec): step 1/1. Catalyzes the attachment of serine to tRNA(Ser). Is also able to aminoacylate tRNA(Sec) with serine, to form the misacylated tRNA L-seryl-tRNA(Sec), which will be further converted into selenocysteinyl-tRNA(Sec). The chain is Serine--tRNA ligase from Verminephrobacter eiseniae (strain EF01-2).